The sequence spans 486 residues: MPQLRDSGTRSLHATEPVPSAEMDGFCRIFGVETEYGVAVTGAERPVDAGQVAMTMFQPIVSRSRSTNTYLTNGSRLYLDVGSHPEYATAEARDPREALAQDLAGEHVMRNLALKAQRKLRESYGAHATIHVFKNNVDSAGHAFGCHENYLVRRFVPLETIEHQLLPFLITRQLYTGAGRMTPDGFQITQRADFLDEAVSSATTRSRPMVNTRDEPHADPDSFRRLHVIIGDSNRSQWSTWMKLAVTHLVLCAIEDAFRHGTPSGFEHCAFADPAAANRTVSRFLDDPHAELTLESGESVSALGLQRRYYAAVKAFIETHVDALASSLPATTIDTIMGEWSRVLDALERGAYDALADRVDWAAKKRLFDALKRRRPDVTFAQMEQLELDYHDIANGRLYGSLVARNQMRELLTGDNVEYAVHNPPTDTRAALRGRFVDAALNVGAQFSADWTHLTLTAPERREAILLDPFEAEPTLGFEQLMEALN.

Mg(2+) is bound at residue E33. Residue R76 coordinates ATP. Residue Y78 participates in Mg(2+) binding. The active-site Proton acceptor is the D80. E86 contributes to the Mg(2+) binding site. ATP-binding residues include T89 and W451.

It belongs to the Pup ligase/Pup deamidase family. Pup-conjugating enzyme subfamily.

It carries out the reaction ATP + [prokaryotic ubiquitin-like protein]-L-glutamate + [protein]-L-lysine = ADP + phosphate + N(6)-([prokaryotic ubiquitin-like protein]-gamma-L-glutamyl)-[protein]-L-lysine.. Its pathway is protein degradation; proteasomal Pup-dependent pathway. It participates in protein modification; protein pupylation. In terms of biological role, catalyzes the covalent attachment of the prokaryotic ubiquitin-like protein modifier Pup to the proteasomal substrate proteins, thereby targeting them for proteasomal degradation. This tagging system is termed pupylation. The ligation reaction involves the side-chain carboxylate of the C-terminal glutamate of Pup and the side-chain amino group of a substrate lysine. This is Pup--protein ligase from Bifidobacterium longum (strain DJO10A).